Consider the following 455-residue polypeptide: Probable glycine dehydrogenase (decarboxylating) subunit 1 (455 aa).

The protein belongs to the GcvP family. N-terminal subunit subfamily. As to quaternary structure, the glycine cleavage system is composed of four proteins: P, T, L and H. In this organism, the P 'protein' is a heterodimer of two subunits.

The enzyme catalyses N(6)-[(R)-lipoyl]-L-lysyl-[glycine-cleavage complex H protein] + glycine + H(+) = N(6)-[(R)-S(8)-aminomethyldihydrolipoyl]-L-lysyl-[glycine-cleavage complex H protein] + CO2. In terms of biological role, the glycine cleavage system catalyzes the degradation of glycine. The P protein binds the alpha-amino group of glycine through its pyridoxal phosphate cofactor; CO(2) is released and the remaining methylamine moiety is then transferred to the lipoamide cofactor of the H protein. The polypeptide is Probable glycine dehydrogenase (decarboxylating) subunit 1 (Francisella tularensis subsp. tularensis (strain FSC 198)).